The sequence spans 102 residues: Small ribosomal subunit protein uS10 (102 aa).

Belongs to the universal ribosomal protein uS10 family. Part of the 30S ribosomal subunit.

Its function is as follows. Involved in the binding of tRNA to the ribosomes. The sequence is that of Small ribosomal subunit protein uS10 from Geotalea daltonii (strain DSM 22248 / JCM 15807 / FRC-32) (Geobacter daltonii).